We begin with the raw amino-acid sequence, 430 residues long: RPM1 interacting protein 13 (430 aa).

The disordered stretch occupies residues 1-21 (MGSGNHVDIVDVSSGEEDVDT). Positions 231–300 (RHRIRQPIPH…QVSQSSHHSS (70 aa)) are nuclear localization.

In terms of assembly, interacts with RPM1 (via its NB-ARC domain). Binds to ARF1 in the nucleus.

The protein resides in the nucleus. Resistance protein interactor which positively enhances RPM1-mediated resistance to necrotrophic bacterial pathogens Pseudomonas syringae pv. tomato DC3000 harboring type III effector protein AvrRpm1 or AvrB, but prevents the hypersensitive response (HR) controlled by RPM1. Together with ARF1, promotes leaf senescence and cell death, probably by facilitating the translocation of ARF1 into the nucleus, and activates ROS-related enzymes (e.g. POD, CAT and SOD). The protein is RPM1 interacting protein 13 of Arabidopsis thaliana (Mouse-ear cress).